Reading from the N-terminus, the 835-residue chain is BCL11 transcription factor A (835 aa).

The segment covering 1–12 (MSRRKQGKPQHL) has biased composition (basic residues). The tract at residues 1 to 41 (MSRRKQGKPQHLSKREFSPEPLEAILTDDEPDHGPLGAPEG) is disordered. The interval 1–210 (MSRRKQGKPQ…SEHGSPLTPR (210 aa)) is required for nuclear body formation and for SUMO1 recruitment. The C2HC-type zinc-finger motif lies at 45 to 71 (LLTCGQCQMNFPLGDILIFIEHKRKQC). Zn(2+)-binding residues include Cys48, Cys51, His66, and Cys71. Phosphoserine is present on Ser86. A Glycyl lysine isopeptide (Lys-Gly) (interchain with G-Cter in SUMO2) cross-link involves residue Lys123. Ile162 is modified (phosphothreonine). Residue Lys164 forms a Glycyl lysine isopeptide (Lys-Gly) (interchain with G-Cter in SUMO2) linkage. Residues 170–193 (YTCTTCKQPFTSAWFLLQHAQNTH) form a C2H2-type 1 zinc finger. Ser205 is subject to Phosphoserine. A Phosphothreonine modification is found at Pro214. An Asymmetric dimethylarginine modification is found at Arg271. The interval 323-376 (AGNTSSPPLSPGRPSPMQRLLQPFQPGSKPPFLATPPLPPLQSAPPPSQPPVKS) is disordered. Residues Ser332 and Ser337 each carry the phosphoserine modification. Residues 355–372 (LATPPLPPLQSAPPPSQP) are compositionally biased toward pro residues. C2H2-type zinc fingers lie at residues 377 to 399 (KSCE…RRSH) and 405 to 429 (YKCN…THMH). Basic residues predominate over residues 421–430 (KRHMKTHMHK). Disordered stretches follow at residues 421–458 (KRHM…LVGS), 471–512 (KSEN…ERVD), and 572–619 (RSHL…GLSK). Residues 441–450 (GLSTASSPEP) show a composition bias toward polar residues. A phosphoserine mark is found at Ser446 and Ser447. Residues 482 to 506 (NGDEEEEEDDEEEEEEEEEEEEELT) show a composition bias toward acidic residues. The segment covering 574 to 584 (HLAEAEGHRDT) has biased composition (basic and acidic residues). Ser608 carries the post-translational modification Phosphoserine. Lys620 is covalently cross-linked (Glycyl lysine isopeptide (Lys-Gly) (interchain with G-Cter in SUMO2)). A phosphoserine mark is found at Ser625 and Ser630. Lys634 is covalently cross-linked (Glycyl lysine isopeptide (Lys-Gly) (interchain with G-Cter in SUMO1)). The segment covering 682 to 696 (SPFASSSEHSSENGS) has biased composition (low complexity). Thr701 bears the Phosphothreonine mark. Gly residues predominate over residues 706-720 (LDGGISGRSGTGSGG). Residues 737-835 (EGRRSDTCEY…RVLNNDIKTE (99 aa)) are DNA-binding. The segment at 742–764 (DTCEYCGKVFKNCSNLTVHRRSH) adopts a C2H2-type 4 zinc-finger fold. Zn(2+) is bound by residues Cys744, Cys747, His760, and His764. Positions 764–773 (HTGERPYKCE) are enriched in polar residues. Residues 765 to 769 (TGERP) are disordered. The C2H2-type 5 zinc-finger motif lies at 770–792 (YKCELCNYACAQSSKLTRHMKTH). Zn(2+) is bound by residues Cys772, Cys775, His788, and His792. The tract at residues 793-799 (GQVGKDV) is disordered. Residues 800–823 (YKCEICKMPFSVYSTLEKHMKKWH) form a C2H2-type 6 zinc finger. Zn(2+) is bound by residues Cys802, Cys805, His818, and His823.

As to quaternary structure, homotetrameric; self-associates via C2HC-type zinc finger domain. Interacts with MTA2, a component of the nucleosome remodeling and deacetylase (NuRD) repressor complex. Interacts with NR2F1, PIAS3, NR2F2 and NR2F6. Interacts with TBR1. Post-translationally, sumoylated with SUMO1. Isoforms are expressed in a tissue-specific fashion. Isoforms 1, isoform 2, and isoform 3 are expressed at similar levels in testis, kidney and spleen. Isoform 1 is expressed in the stomach, and isoform 2 is expressed exclusively in the lung. Overexpression following proviral integration in hematopoietic cells results in the generation of myeloid leukemia.

The protein resides in the cytoplasm. It is found in the nucleus. In terms of biological role, transcription factor. Associated with the BAF SWI/SNF chromatin remodeling complex. Binds to the 5'-TGACCA-3' sequence motif in regulatory regions of target genes. Involved in brain development. May play a role in hematopoiesis. Essential factor in lymphopoiesis, required for B-cell formation in fetal liver. May function as a modulator of the transcriptional repression activity of NR2F2. This chain is BCL11 transcription factor A (Bcl11a), found in Mus musculus (Mouse).